Consider the following 335-residue polypeptide: Phenylalanine--tRNA ligase alpha subunit (335 aa).

Glu-262 is a Mg(2+) binding site.

This sequence belongs to the class-II aminoacyl-tRNA synthetase family. Phe-tRNA synthetase alpha subunit type 1 subfamily. Tetramer of two alpha and two beta subunits. Requires Mg(2+) as cofactor.

It is found in the cytoplasm. The enzyme catalyses tRNA(Phe) + L-phenylalanine + ATP = L-phenylalanyl-tRNA(Phe) + AMP + diphosphate + H(+). The protein is Phenylalanine--tRNA ligase alpha subunit of Prochlorococcus marinus (strain MIT 9313).